Here is a 27-residue protein sequence, read N- to C-terminus: Peptide Cn29 (27 aa).

Intrachain disulfides connect Cys-2–Cys-23, Cys-5–Cys-18, and Cys-12–Cys-25.

In terms of tissue distribution, expressed by the venom gland.

It is found in the secreted. The chain is Peptide Cn29 from Centruroides noxius (Mexican scorpion).